Here is a 550-residue protein sequence, read N- to C-terminus: Chaperonin GroEL 1 (550 aa).

ATP contacts are provided by residues 30-33 (TLGP), Lys51, 87-91 (DGTTT), Gly415, and Asp496.

It belongs to the chaperonin (HSP60) family. Forms a cylinder of 14 subunits composed of two heptameric rings stacked back-to-back. Interacts with the co-chaperonin GroES.

Its subcellular location is the cytoplasm. The catalysed reaction is ATP + H2O + a folded polypeptide = ADP + phosphate + an unfolded polypeptide.. Its function is as follows. Together with its co-chaperonin GroES, plays an essential role in assisting protein folding. The GroEL-GroES system forms a nano-cage that allows encapsulation of the non-native substrate proteins and provides a physical environment optimized to promote and accelerate protein folding. The protein is Chaperonin GroEL 1 of Rhodopseudomonas palustris (strain HaA2).